The sequence spans 424 residues: Oleosin-B3 (424 aa).

A polar region spans residues 1–37 (MRNEIQNETAQTDQTQGSMFSFFNLFPFLLPMFEVIK). 3 helical membrane-spanning segments follow: residues 16–36 (QGSM…FEVI), 38–58 (MVVA…TLSG), and 69–89 (LFII…VLAA). Residues 38–119 (MVVASVASVV…GIPESIKPSN (82 aa)) are hydrophobic. Tandem repeats lie at residues 111 to 120 (IPESIKPSNV), 121 to 130 (IPESIKPSNI), 131 to 140 (IPESIKPSNI), 141 to 150 (IPVSIKPSNI), 196 to 202 (EDKHGKG), 203 to 209 (ESKHGKG), 210 to 216 (ESKHGKG), 217 to 223 (ESTHGKG), 241 to 258 (KHGS…GSGG), 259 to 276 (KHES…GSGG), 277 to 294 (KHES…ESVG), 301 to 318 (KHES…GSGG), 319 to 336 (KHES…GSGG), 337 to 354 (RHEG…GSGG), 396 to 400 (SSDGS), 401 to 405 (SSDGS), 406 to 410 (SSDGS), and 411 to 415 (SSDGS). Positions 111–150 (IPESIKPSNVIPESIKPSNIIPESIKPSNIIPVSIKPSNI) are 4 X 10 AA tandem repeats of I-P-[EV]-S-I-K-P-S-N-[IV]. A disordered region spans residues 164–424 (KIKAKQEEKS…SSHGSGGKHI (261 aa)). Over residues 167–220 (AKQEEKSKGKSEDSSKGKGKSKGEDTTTDEDKHGKGESKHGKGESKHGKGESTH) the composition is skewed to basic and acidic residues. A 4 X 7 AA tandem repeats of E-[SD]-[KT]-H-G-K-G region spans residues 196–223 (EDKHGKGESKHGKGESKHGKGESTHGKG). The segment at 241 to 354 (KHGSGGSPMG…MGGGKHGSGG (114 aa)) is 6 X 18 AA tandem repeats of [KR]-H-[EG]-[SG]-G-G-[SA]-[PSA]-M-G-G-G-K-H-[GE]-S-[GV]-G. The span at 242–255 (HGSGGSPMGGGKHG) shows a compositional bias: gly residues. Over residues 288 to 304 (GKHESVGKHGSGGKHES) the composition is skewed to basic and acidic residues. Positions 341–355 (GGSAMGGGKHGSGGK) are enriched in gly residues. Over residues 391-416 (SSTSESSDGSSSDGSSSDGSSSDGSS) the composition is skewed to low complexity. The interval 396-415 (SSDGSSSDGSSSDGSSSDGS) is 4 X 5 AA tandem repeats of S-S-D-G-S.

Belongs to the oleosin family. The full-length protein is found in the tapetal lipid bodies of immature anthers, the proteolytically cleaved C-terminal product is found on the coats of pollen grains. No expression is detected in other flower organs, siliques or seedlings.

Its subcellular location is the lipid droplet. It is found in the membrane. Its function is as follows. Many of the major pollen coat proteins are derived from endoproteolytic cleavage of oleosin-like proteins. The polypeptide is Oleosin-B3 (Brassica napus (Rape)).